A 165-amino-acid polypeptide reads, in one-letter code: Cyclic pyranopterin monophosphate synthase (165 aa).

Residues 83 to 85 and 120 to 121 each bind substrate; these read FCH and ME. The active site involves Asp-135.

Belongs to the MoaC family. In terms of assembly, homohexamer; trimer of dimers.

The catalysed reaction is (8S)-3',8-cyclo-7,8-dihydroguanosine 5'-triphosphate = cyclic pyranopterin phosphate + diphosphate. It functions in the pathway cofactor biosynthesis; molybdopterin biosynthesis. In terms of biological role, catalyzes the conversion of (8S)-3',8-cyclo-7,8-dihydroguanosine 5'-triphosphate to cyclic pyranopterin monophosphate (cPMP). This chain is Cyclic pyranopterin monophosphate synthase, found in Xanthomonas axonopodis pv. citri (strain 306).